Consider the following 335-residue polypeptide: GTPase Obg (335 aa).

One can recognise an Obg domain in the interval 4-162 (GNFVDYTKIY…ADIVLELKVL (159 aa)). The OBG-type G domain occupies 163 to 332 (ADVGLVGFPN…LKDKLWAMLN (170 aa)). GTP is bound by residues 169-176 (GFPNAGKS), 194-198 (FTTLK), 216-219 (DIPG), 283-286 (SKCD), and 313-315 (SSI). Residues Ser176 and Thr196 each contribute to the Mg(2+) site.

This sequence belongs to the TRAFAC class OBG-HflX-like GTPase superfamily. OBG GTPase family. As to quaternary structure, monomer. Requires Mg(2+) as cofactor.

The protein localises to the cytoplasm. Its function is as follows. An essential GTPase which binds GTP, GDP and possibly (p)ppGpp with moderate affinity, with high nucleotide exchange rates and a fairly low GTP hydrolysis rate. Plays a role in control of the cell cycle, stress response, ribosome biogenesis and in those bacteria that undergo differentiation, in morphogenesis control. This Flavobacterium psychrophilum (strain ATCC 49511 / DSM 21280 / CIP 103535 / JIP02/86) protein is GTPase Obg.